A 419-amino-acid polypeptide reads, in one-letter code: MHKVFASDFFNFEFLRLLGTVPFQGAEVGECLTTAGRIKDGDPESWYRAWRDQAEKAQALAEEAAAVGDRTGACWAYIRAANYWRASEFLLHCTPNDPRILAASKASVNAFDKGWVLLDATVKSFEIPYDKDIKLPGRLYLPAPHHRLPGKIPVVLQTGGFDSTQEELYFYGAAGALPRGYAVFSFDGPGQGLPLRVGKLKLRTDWEYVVSQVLDFVTDDIAPEYDLDLERLAIFGASLGGYLSLRAAVDPRIKACISCDGPLDLFEITRSRMPSWFINGWLSGWVSDGLFNWVVDALTAVNFQIAWEFGHGKWVFGVETPADVLRVMQQISLKGGYLSKIKCPTLITGAADSFYFTPDINANPIFEGLTALGSNEKHLWIGKGVEGGGLQAKIGALAVVHHKMFTWLDSTFAIKRDVL.

S238 is a catalytic residue.

The protein belongs to the AB hydrolase superfamily. FUS2 hydrolase family.

Its pathway is mycotoxin biosynthesis. In terms of biological role, 20-hydroxy-prefusarin hydrolase; part of the gene cluster that mediates the biosynthesis of the mycotoxin fusarin C. Within the cluster, FUS1, FUS2, FUS8 and FUS9 are sufficient for fusarin production. The roles of the other FUS members are yet undetermined. The fusarin C synthetase FUS1 is responsible for the condensation of one acetyl-coenzyme A (CoA) unit with six malonyl-CoA units and the amide linkage of the arising heptaketide and homoserine, subsequently releasing the first intermediate, prefusarin, as an alcohol with an open ring structure. The cytochrome P450 monooxygenase FUS8 participates in multiple oxidation processes at carbon C-20 and is able to use the FUS1 product as substrate, resulting in formation of 20-hydroxy-prefusarin. This reaction seems to be essential before the 2-pyrrolidone ring closure can be catalyzed by FUS2, generating 20-hydroxy-fusarin. FUS8 is able to further oxidizes carbon C-20 after ring closure, resulting in the formation of carboxy-fusarin C. As the last step, FUS9 methylates the hydroxyl group at C-21 to generate fusarin C. Fusarin C can then rearrange to epi-fusarin C, the (z)-isomers, and fusarin A and fusarin D. This is 20-hydroxy-prefusarin hydrolase FUS2 from Gibberella moniliformis (strain M3125 / FGSC 7600) (Maize ear and stalk rot fungus).